Consider the following 564-residue polypeptide: CTP synthase (564 aa).

The interval 1–265 is amidoligase domain; that stretch reads MTKFVFVTGG…DEIVCHRLDI (265 aa). Position 13 (S13) interacts with CTP. UTP is bound at residue S13. ATP contacts are provided by residues 14–19 and D71; that span reads SLGKGI. Mg(2+) is bound by residues D71 and E139. CTP is bound by residues 146-148, 186-191, and K222; these read DIE and KTKPTQ. UTP-binding positions include 186 to 191 and K222; that span reads KTKPTQ. Residues 290–543 enclose the Glutamine amidotransferase type-1 domain; sequence SIALVGKYVD…IQAAISFAGQ (254 aa). G351 lines the L-glutamine pocket. C378 serves as the catalytic Nucleophile; for glutamine hydrolysis. Residues 379 to 382, E402, and R469 each bind L-glutamine; that span reads LGMQ. Catalysis depends on residues H516 and E518.

This sequence belongs to the CTP synthase family. In terms of assembly, homotetramer.

The catalysed reaction is UTP + L-glutamine + ATP + H2O = CTP + L-glutamate + ADP + phosphate + 2 H(+). The enzyme catalyses L-glutamine + H2O = L-glutamate + NH4(+). It catalyses the reaction UTP + NH4(+) + ATP = CTP + ADP + phosphate + 2 H(+). The protein operates within pyrimidine metabolism; CTP biosynthesis via de novo pathway; CTP from UDP: step 2/2. Its activity is regulated as follows. Allosterically activated by GTP, when glutamine is the substrate; GTP has no effect on the reaction when ammonia is the substrate. The allosteric effector GTP functions by stabilizing the protein conformation that binds the tetrahedral intermediate(s) formed during glutamine hydrolysis. Inhibited by the product CTP, via allosteric rather than competitive inhibition. Catalyzes the ATP-dependent amination of UTP to CTP with either L-glutamine or ammonia as the source of nitrogen. Regulates intracellular CTP levels through interactions with the four ribonucleotide triphosphates. The protein is CTP synthase of Nitrosomonas europaea (strain ATCC 19718 / CIP 103999 / KCTC 2705 / NBRC 14298).